The following is an 87-amino-acid chain: Small ribosomal subunit protein bS20 (87 aa).

The segment at 1-22 is disordered; sequence MANSAQARKRARQAVKQRAHNA. A compositionally biased stretch (basic residues) spans 7–19; it reads ARKRARQAVKQRA.

Belongs to the bacterial ribosomal protein bS20 family.

Functionally, binds directly to 16S ribosomal RNA. The polypeptide is Small ribosomal subunit protein bS20 (Methylobacillus flagellatus (strain ATCC 51484 / DSM 6875 / VKM B-1610 / KT)).